The following is a 1324-amino-acid chain: Ubiquitin carboxyl-terminal hydrolase 42 (1324 aa).

Disordered regions lie at residues 1–38 (MTIVDKASESSDPSAYQNQPGSSEAVSPGDMDAGSASW) and 63–87 (YSSSSVPDKSKPSPQKDQALGDGIA). A compositionally biased stretch (polar residues) spans 10–25 (SSDPSAYQNQPGSSEA). The span at 63 to 80 (YSSSSVPDKSKPSPQKDQ) shows a compositional bias: low complexity. Residue Ser-75 is modified to Phosphoserine. In terms of domain architecture, USP spans 111 to 412 (AGLQNLGNTC…QAYVLFYIRS (302 aa)). Catalysis depends on Cys-120, which acts as the Nucleophile. The active-site Proton acceptor is His-371. Disordered regions lie at residues 452-494 (IGPQ…NRAS), 536-707 (QSQP…MPAP), 722-1026 (LSNK…RHRS), 1085-1131 (RAGL…HPDR), 1149-1254 (DRFH…VKDS), and 1275-1294 (GGFPLSGGPPLEGVGPFREK). Residues 477–489 (PSSSMSSPNGNSS) are compositionally biased toward low complexity. Phosphoserine is present on Ser-483. A compositionally biased stretch (polar residues) spans 536–564 (QSQPNLHSNSLENPTKPVPSSTITNSAVQ). Residues 565 to 576 (STSNASTMSVSS) are compositionally biased toward low complexity. Residues 586-603 (ESCSQPVMNGKSKLNSSV) are compositionally biased toward polar residues. Residues Ser-754 and Ser-856 each carry the phosphoserine modification. Basic and acidic residues-rich tracts occupy residues 938-974 (AKEKIGSLRKVDRGHYRSRRERSSSGEPARESRSKTE), 984-1013 (CPRERDRQDRHAPEHHPGHGDRLSPGERRS), 1101-1113 (RGCEPARERERHR), 1149-1158 (DRFHEHENGK), and 1165-1191 (DSVENSDSHVEKKARRSEQKDPLEEPK). The residue at position 1181 (Ser-1181) is a Phosphoserine. Residues 1192–1206 (AKKHKKSKKKKKSKD) show a composition bias toward basic residues. Residues 1207–1218 (KHRDRDSRHQQD) are compositionally biased toward basic and acidic residues. A phosphoserine mark is found at Ser-1219, Ser-1222, and Ser-1226. The span at 1231 to 1245 (HRHKKKKKKKKRHSR) shows a compositional bias: basic residues. The residue at position 1247 (Ser-1247) is a Phosphoserine.

Belongs to the peptidase C19 family. In terms of tissue distribution, broadly expressed.

It catalyses the reaction Thiol-dependent hydrolysis of ester, thioester, amide, peptide and isopeptide bonds formed by the C-terminal Gly of ubiquitin (a 76-residue protein attached to proteins as an intracellular targeting signal).. In terms of biological role, deubiquitinating enzyme which may play an important role during spermatogenesis. In Homo sapiens (Human), this protein is Ubiquitin carboxyl-terminal hydrolase 42 (USP42).